A 77-amino-acid chain; its full sequence is Acyl carrier protein (77 aa).

The 76-residue stretch at 2–77 (ADVLERVTKI…DAVNYIKSRL (76 aa)) folds into the Carrier domain. Ser-37 carries the O-(pantetheine 4'-phosphoryl)serine modification.

It belongs to the acyl carrier protein (ACP) family. Post-translationally, 4'-phosphopantetheine is transferred from CoA to a specific serine of apo-ACP by AcpS. This modification is essential for activity because fatty acids are bound in thioester linkage to the sulfhydryl of the prosthetic group.

It is found in the cytoplasm. It participates in lipid metabolism; fatty acid biosynthesis. Functionally, carrier of the growing fatty acid chain in fatty acid biosynthesis. The sequence is that of Acyl carrier protein from Geobacillus kaustophilus (strain HTA426).